A 571-amino-acid polypeptide reads, in one-letter code: S100P-binding protein (571 aa).

The segment covering 270 to 280 (SDIPFDGDIDE) has biased composition (acidic residues). Disordered regions lie at residues 270 to 312 (SDIP…LESV) and 356 to 385 (NGQN…CSQS). The span at 299–309 (TSESTPASSEL) shows a compositional bias: polar residues. The span at 365 to 378 (PLPPSDTAPGPQLP) shows a compositional bias: pro residues.

Its subcellular location is the nucleus. This chain is S100P-binding protein (s100pbp), found in Xenopus tropicalis (Western clawed frog).